A 98-amino-acid polypeptide reads, in one-letter code: Large ribosomal subunit protein uL23 (98 aa).

Belongs to the universal ribosomal protein uL23 family. In terms of assembly, part of the 50S ribosomal subunit. Contacts protein L29, and trigger factor when it is bound to the ribosome.

Its function is as follows. One of the early assembly proteins it binds 23S rRNA. One of the proteins that surrounds the polypeptide exit tunnel on the outside of the ribosome. Forms the main docking site for trigger factor binding to the ribosome. The protein is Large ribosomal subunit protein uL23 of Frankia alni (strain DSM 45986 / CECT 9034 / ACN14a).